Consider the following 336-residue polypeptide: F420-dependent glucose-6-phosphate dehydrogenase (336 aa).

Asp39 serves as a coordination point for coenzyme F420-(gamma-Glu)n. The active-site Proton donor is His40. Coenzyme F420-(gamma-Glu)n-binding positions include Thr76 and Thr107–Gly108. Glu109 functions as the Proton acceptor in the catalytic mechanism. Residues Asn112, Gly177–Gly178, and Leu180–Val181 each bind coenzyme F420-(gamma-Glu)n. 4 residues coordinate substrate: Thr195, Lys198, Lys259, and Arg283.

Belongs to the F420-dependent glucose-6-phosphate dehydrogenase family. As to quaternary structure, homodimer.

It carries out the reaction oxidized coenzyme F420-(gamma-L-Glu)(n) + D-glucose 6-phosphate + H(+) = 6-phospho-D-glucono-1,5-lactone + reduced coenzyme F420-(gamma-L-Glu)(n). Functionally, catalyzes the coenzyme F420-dependent oxidation of glucose 6-phosphate (G6P) to 6-phosphogluconolactone. The chain is F420-dependent glucose-6-phosphate dehydrogenase from Nocardia farcinica (strain IFM 10152).